Here is a 164-residue protein sequence, read N- to C-terminus: Transcription elongation factor GreA (164 aa).

Residues 15-76 (DRLKNELDQL…LQELLNSAKV (62 aa)) adopt a coiled-coil conformation.

Belongs to the GreA/GreB family.

In terms of biological role, necessary for efficient RNA polymerase transcription elongation past template-encoded arresting sites. The arresting sites in DNA have the property of trapping a certain fraction of elongating RNA polymerases that pass through, resulting in locked ternary complexes. Cleavage of the nascent transcript by cleavage factors such as GreA or GreB allows the resumption of elongation from the new 3'terminus. GreA releases sequences of 2 to 3 nucleotides. The sequence is that of Transcription elongation factor GreA from Rhodococcus erythropolis (strain PR4 / NBRC 100887).